The sequence spans 183 residues: Ferritin heavy chain (183 aa).

Residue M1 is modified to N-acetylmethionine. T2 carries the post-translational modification N-acetylthreonine; in Ferritin heavy chain, N-terminally processed. Residues 11–160 (QNYHQDSEAA…DHVTNLRKMG (150 aa)) enclose the Ferritin-like diiron domain. Fe cation contacts are provided by E28, E63, H66, E108, and Q142. 2 positions are modified to phosphoserine: S179 and S183.

This sequence belongs to the ferritin family. In terms of assembly, oligomer of 24 subunits. There are two types of subunits: L (light) chain and H (heavy) chain. The major chain can be light or heavy, depending on the species and tissue type. In the human liver, the heavy chain is predominant. The functional molecule forms a roughly spherical shell with a diameter of 12 nm and contains a central cavity into which the insoluble mineral iron core is deposited. Interacts with NCOA4; NCOA4 promotes targeting of the iron-binding ferritin complex to autolysosomes following starvation or iron depletion. As to expression, expressed in the liver.

The protein localises to the cytoplasm. The protein resides in the lysosome. It is found in the cytoplasmic vesicle. Its subcellular location is the autophagosome. The enzyme catalyses 4 Fe(2+) + O2 + 4 H(+) = 4 Fe(3+) + 2 H2O. Functionally, stores iron in a soluble, non-toxic, readily available form. Important for iron homeostasis. Has ferroxidase activity. Iron is taken up in the ferrous form and deposited as ferric hydroxides after oxidation. Also plays a role in delivery of iron to cells. Mediates iron uptake in capsule cells of the developing kidney. Delivery to lysosomes is mediated by the cargo receptor NCOA4 for autophagic degradation and release of iron. The chain is Ferritin heavy chain (FTH1) from Homo sapiens (Human).